Here is a 344-residue protein sequence, read N- to C-terminus: tRNA N6-adenosine threonylcarbamoyltransferase (344 aa).

The Fe cation site is built by histidine 111 and histidine 115. Substrate is bound by residues 134–138 (LVSGG), aspartate 167, glycine 180, and asparagine 273. A Fe cation-binding site is contributed by aspartate 301.

It belongs to the KAE1 / TsaD family. It depends on Fe(2+) as a cofactor.

It localises to the cytoplasm. The catalysed reaction is L-threonylcarbamoyladenylate + adenosine(37) in tRNA = N(6)-L-threonylcarbamoyladenosine(37) in tRNA + AMP + H(+). Its function is as follows. Required for the formation of a threonylcarbamoyl group on adenosine at position 37 (t(6)A37) in tRNAs that read codons beginning with adenine. Is involved in the transfer of the threonylcarbamoyl moiety of threonylcarbamoyl-AMP (TC-AMP) to the N6 group of A37, together with TsaE and TsaB. TsaD likely plays a direct catalytic role in this reaction. This Cupriavidus taiwanensis (strain DSM 17343 / BCRC 17206 / CCUG 44338 / CIP 107171 / LMG 19424 / R1) (Ralstonia taiwanensis (strain LMG 19424)) protein is tRNA N6-adenosine threonylcarbamoyltransferase.